A 199-amino-acid chain; its full sequence is Secreted chorismate mutase (199 aa).

Positions 1–33 (MLTRPREIYLATAVSIGILLSLIAPLGPPLARA) are cleaved as a signal peptide. The Chorismate mutase domain maps to 34 to 113 (DGTSQLAELV…ATEAIEYSRF (80 aa)). Substrate-binding positions include R49, K60, D69, 72–76 (RVEQQ), 105–109 (TEAIE), and R134. An intrachain disulfide couples C160 to C193.

In terms of assembly, homodimer.

The protein resides in the secreted. It carries out the reaction chorismate = prephenate. The protein operates within metabolic intermediate biosynthesis; prephenate biosynthesis; prephenate from chorismate: step 1/1. Tyrosine, phenylalanine, and tryptophan moderately enhance chorismate mutase activity at low concentrations, but allosterically inhibit the enzyme at higher concentrations. Its function is as follows. Catalyzes the Claisen rearrangement of chorismate to prephenate. May play some role in the pathogenicity. The chain is Secreted chorismate mutase from Mycobacterium tuberculosis (strain ATCC 25618 / H37Rv).